The primary structure comprises 306 residues: Acetyl-coenzyme A carboxylase carboxyl transferase subunit beta (306 aa).

Residues 25-294 (LWIKDPTSGE…AVNPSNPSPT (270 aa)) enclose the CoA carboxyltransferase N-terminal domain. Residues 286–306 (VNPSNPSPTDSQPPLSKAEAA) form a disordered region. Polar residues predominate over residues 287–299 (NPSNPSPTDSQPP).

It belongs to the AccD/PCCB family. In terms of assembly, acetyl-CoA carboxylase is a heterohexamer composed of biotin carboxyl carrier protein (AccB), biotin carboxylase (AccC) and two subunits each of ACCase subunit alpha (AccA) and ACCase subunit beta (AccD).

It localises to the cytoplasm. The enzyme catalyses N(6)-carboxybiotinyl-L-lysyl-[protein] + acetyl-CoA = N(6)-biotinyl-L-lysyl-[protein] + malonyl-CoA. Its pathway is lipid metabolism; malonyl-CoA biosynthesis; malonyl-CoA from acetyl-CoA: step 1/1. Its function is as follows. Component of the acetyl coenzyme A carboxylase (ACC) complex. Biotin carboxylase (BC) catalyzes the carboxylation of biotin on its carrier protein (BCCP) and then the CO(2) group is transferred by the transcarboxylase to acetyl-CoA to form malonyl-CoA. The chain is Acetyl-coenzyme A carboxylase carboxyl transferase subunit beta from Bartonella quintana (strain Toulouse) (Rochalimaea quintana).